Reading from the N-terminus, the 60-residue chain is Single-pass membrane and coiled-coil domain-containing protein 4 homolog (60 aa).

The disordered stretch occupies residues 1 to 22 (MRKLRGGQTRETRKQKQERREE). Basic and acidic residues predominate over residues 8 to 22 (QTRETRKQKQERREE). Positions 8–34 (QTRETRKQKQERREENQKIQQQLKTIV) form a coiled coil. A helical transmembrane segment spans residues 30–50 (LKTIVLPICGVVFLCIVAYVF).

This sequence belongs to the SMCO4 family.

The protein localises to the membrane. The chain is Single-pass membrane and coiled-coil domain-containing protein 4 homolog from Culex quinquefasciatus (Southern house mosquito).